Consider the following 182-residue polypeptide: Ribosome maturation factor RimM (182 aa).

A PRC barrel domain is found at 103-182 (EDEFYWRELF…RIEVDWDPGF (80 aa)).

The protein belongs to the RimM family. In terms of assembly, binds ribosomal protein uS19.

The protein localises to the cytoplasm. Functionally, an accessory protein needed during the final step in the assembly of 30S ribosomal subunit, possibly for assembly of the head region. Essential for efficient processing of 16S rRNA. May be needed both before and after RbfA during the maturation of 16S rRNA. It has affinity for free ribosomal 30S subunits but not for 70S ribosomes. The sequence is that of Ribosome maturation factor RimM from Vibrio vulnificus (strain CMCP6).